The sequence spans 281 residues: 4-hydroxy-3-methylbut-2-enyl diphosphate reductase (281 aa).

[4Fe-4S] cluster is bound at residue C12. (2E)-4-hydroxy-3-methylbut-2-enyl diphosphate contacts are provided by H41 and H74. Dimethylallyl diphosphate contacts are provided by H41 and H74. The isopentenyl diphosphate site is built by H41 and H74. Position 96 (C96) interacts with [4Fe-4S] cluster. H124 serves as a coordination point for (2E)-4-hydroxy-3-methylbut-2-enyl diphosphate. H124 contributes to the dimethylallyl diphosphate binding site. Isopentenyl diphosphate is bound at residue H124. E126 functions as the Proton donor in the catalytic mechanism. T164 contributes to the (2E)-4-hydroxy-3-methylbut-2-enyl diphosphate binding site. Residue C193 coordinates [4Fe-4S] cluster. (2E)-4-hydroxy-3-methylbut-2-enyl diphosphate-binding residues include S221, N223, and S265. Residues S221, N223, and S265 each coordinate dimethylallyl diphosphate. The isopentenyl diphosphate site is built by S221, N223, and S265.

It belongs to the IspH family. Requires [4Fe-4S] cluster as cofactor.

The catalysed reaction is isopentenyl diphosphate + 2 oxidized [2Fe-2S]-[ferredoxin] + H2O = (2E)-4-hydroxy-3-methylbut-2-enyl diphosphate + 2 reduced [2Fe-2S]-[ferredoxin] + 2 H(+). The enzyme catalyses dimethylallyl diphosphate + 2 oxidized [2Fe-2S]-[ferredoxin] + H2O = (2E)-4-hydroxy-3-methylbut-2-enyl diphosphate + 2 reduced [2Fe-2S]-[ferredoxin] + 2 H(+). Its pathway is isoprenoid biosynthesis; dimethylallyl diphosphate biosynthesis; dimethylallyl diphosphate from (2E)-4-hydroxy-3-methylbutenyl diphosphate: step 1/1. The protein operates within isoprenoid biosynthesis; isopentenyl diphosphate biosynthesis via DXP pathway; isopentenyl diphosphate from 1-deoxy-D-xylulose 5-phosphate: step 6/6. Functionally, catalyzes the conversion of 1-hydroxy-2-methyl-2-(E)-butenyl 4-diphosphate (HMBPP) into a mixture of isopentenyl diphosphate (IPP) and dimethylallyl diphosphate (DMAPP). Acts in the terminal step of the DOXP/MEP pathway for isoprenoid precursor biosynthesis. This is 4-hydroxy-3-methylbut-2-enyl diphosphate reductase from Oleidesulfovibrio alaskensis (strain ATCC BAA-1058 / DSM 17464 / G20) (Desulfovibrio alaskensis).